Consider the following 185-residue polypeptide: Ribosome-recycling factor (185 aa).

This sequence belongs to the RRF family.

Its subcellular location is the cytoplasm. Responsible for the release of ribosomes from messenger RNA at the termination of protein biosynthesis. May increase the efficiency of translation by recycling ribosomes from one round of translation to another. The protein is Ribosome-recycling factor of Pseudoalteromonas atlantica (strain T6c / ATCC BAA-1087).